We begin with the raw amino-acid sequence, 363 residues long: tRNA dimethylallyltransferase (363 aa).

65 to 72 (GPTASGKS) contributes to the ATP binding site. Position 67–72 (67–72 (TASGKS)) interacts with substrate. Interaction with substrate tRNA regions lie at residues 90 to 93 (DSMQ) and 214 to 218 (QRLIR).

This sequence belongs to the IPP transferase family. In terms of assembly, monomer. Requires Mg(2+) as cofactor.

The catalysed reaction is adenosine(37) in tRNA + dimethylallyl diphosphate = N(6)-dimethylallyladenosine(37) in tRNA + diphosphate. Catalyzes the transfer of a dimethylallyl group onto the adenine at position 37 in tRNAs that read codons beginning with uridine, leading to the formation of N6-(dimethylallyl)adenosine (i(6)A). The sequence is that of tRNA dimethylallyltransferase from Rickettsia rickettsii (strain Sheila Smith).